A 222-amino-acid polypeptide reads, in one-letter code: Glutathione S-transferase alpha-4 (222 aa).

Methionine 1 carries the post-translational modification N-acetylmethionine. Residues 3-83 enclose the GST N-terminal domain; that stretch reads VKPKLYYFQG…YLAAKYNLYG (81 aa). Glutathione-binding positions include tyrosine 9, 54–55, and 67–68; these read QV and QT. The region spanning 85-208 is the GST C-terminal domain; it reads DLKERVRIDM…QPGSQRKPPP (124 aa).

This sequence belongs to the GST superfamily. Alpha family. In terms of assembly, homodimer.

The protein resides in the cytoplasm. It catalyses the reaction RX + glutathione = an S-substituted glutathione + a halide anion + H(+). In terms of biological role, conjugation of reduced glutathione to a wide number of exogenous and endogenous hydrophobic electrophiles. In Rattus norvegicus (Rat), this protein is Glutathione S-transferase alpha-4 (Gsta4).